Here is a 449-residue protein sequence, read N- to C-terminus: Adenylosuccinate synthetase (449 aa).

Residues 37 to 43 (GDEGKGK) and 65 to 67 (GHT) each bind GTP. Aspartate 38 serves as the catalytic Proton acceptor. Residues aspartate 38 and glycine 65 each coordinate Mg(2+). Residues 38-41 (DEGK), 63-66 (NAGH), threonine 155, arginine 169, asparagine 247, threonine 262, and arginine 326 each bind IMP. The active-site Proton donor is the histidine 66. 322–328 (VTTKRKR) contacts substrate. GTP contacts are provided by residues arginine 328, 354 to 356 (KLD), and 437 to 439 (GVG).

The protein belongs to the adenylosuccinate synthetase family. As to quaternary structure, homodimer. Requires Mg(2+) as cofactor.

The protein localises to the cytoplasm. The enzyme catalyses IMP + L-aspartate + GTP = N(6)-(1,2-dicarboxyethyl)-AMP + GDP + phosphate + 2 H(+). It participates in purine metabolism; AMP biosynthesis via de novo pathway; AMP from IMP: step 1/2. Plays an important role in the de novo pathway and in the salvage pathway of purine nucleotide biosynthesis. Catalyzes the first committed step in the biosynthesis of AMP from IMP. This Drosophila willistoni (Fruit fly) protein is Adenylosuccinate synthetase.